A 504-amino-acid chain; its full sequence is Acid phosphatase A (504 aa).

Positions Met-1 to Ala-22 are cleaved as a signal peptide. Residues Asn-84, Asn-112, Asn-168, Asn-260, Asn-415, Asn-450, and Asn-474 are each glycosylated (N-linked (GlcNAc...) asparagine).

The protein belongs to the metallophosphoesterase superfamily. Purple acid phosphatase family. Monomer.

It is found in the secreted. The catalysed reaction is a phosphate monoester + H2O = an alcohol + phosphate. In terms of biological role, acid phosphatase involved in the regulation of fungal phenotypic traits and virulence in C.parasitica. The polypeptide is Acid phosphatase A (Cryphonectria parasitica (strain ATCC 38755 / EP155)).